A 756-amino-acid chain; its full sequence is Xylosyl- and glucuronyltransferase LARGE1 (756 aa).

Topologically, residues 1-10 (MLGICRGRRK) are cytoplasmic. Residues 11–31 (FLAASLTVLFVPAVTWIYLFA) traverse the membrane as a helical; Signal-anchor for type II membrane protein segment. The Lumenal segment spans residues 32–756 (GSFEDGKPVS…LKYLTAENNS (725 aa)). 2 disordered regions span residues 42-63 (LSPL…RDRE) and 81-109 (KQLS…EGTG). The segment covering 44–58 (PLESQPHSPRYTASS) has biased composition (polar residues). A coiled-coil region spans residues 55-90 (TASSQRDRESLEVRMREVEEENRVLRKQLSLAQGRS). 3 N-linked (GlcNAc...) asparagine glycosylation sites follow: N97, N122, and N148. The interval 138 to 413 (IHVAIVCAGY…FLEYDGNLLR (276 aa)) is xylosyltransferase activity. Positions 242 and 244 each coordinate Mn(2+). N272 carries an N-linked (GlcNAc...) asparagine glycan. The segment at 414–756 (RELFGCPSEA…LKYLTAENNS (343 aa)) is glucuronyltransferase activity. Mn(2+)-binding residues include D563 and D565.

The protein in the C-terminal section; belongs to the glycosyltransferase 49 family. It in the N-terminal section; belongs to the glycosyltransferase 8 family. The cofactor is Mn(2+).

It localises to the golgi apparatus membrane. It carries out the reaction 3-O-[beta-D-GlcA-(1-&gt;3)-beta-D-Xyl-(1-&gt;4)-Rib-ol-P-Rib-ol-P-3-beta-D-GalNAc-(1-&gt;3)-beta-D-GlcNAc-(1-&gt;4)-(O-6-P-alpha-D-Man)]-Thr-[protein] + UDP-alpha-D-xylose = 3-O-[alpha-D-Xyl-(1-&gt;3)-beta-D-GlcA-(1-&gt;4)-beta-D-Xyl-(1-&gt;4)-Rib-ol-P-Rib-ol-P-3-beta-D-GalNAc-(1-&gt;3)-beta-D-GlcNAc-(1-&gt;4)-(O-6-P-alpha-D-Man)]-Thr-[protein] + UDP + H(+). The enzyme catalyses 3-O-{(1-&gt;[3)-alpha-D-Xyl-(1-&gt;3)-beta-D-GlcA-(1-&gt;](n)-4)-beta-D-Xyl-(1-&gt;4)-Rib-ol-P-Rib-ol-P-3-beta-D-GalNAc-(1-&gt;3)-beta-D-GlcNAc-(1-&gt;4)-O-6-P-alpha-D-Man}-L-Thr-[protein] + UDP-alpha-D-glucuronate = 3-O-{beta-D-GlcA-(1-&gt;[3)-alpha-D-Xyl-(1-&gt;3)-beta-D-GlcA-(1-&gt;](n)-4)-beta-D-Xyl-(1-&gt;4)-Rib-ol-P-Rib-ol-P-3-beta-D-GalNAc-(1-&gt;3)-beta-D-GlcNAc-(1-&gt;4)-O-6-P-alpha-D-Man}-L-Thr-[protein] + UDP + H(+). The catalysed reaction is 3-O-{beta-D-GlcA-(1-&gt;[3)-alpha-D-Xyl-(1-&gt;3)-beta-D-GlcA-(1-&gt;](n)-4)-beta-D-Xyl-(1-&gt;4)-Rib-ol-P-Rib-ol-P-3-beta-D-GalNAc-(1-&gt;3)-beta-D-GlcNAc-(1-&gt;4)-O-6-P-alpha-D-Man}-L-Thr-[protein] + UDP-alpha-D-xylose = 3-O-{(1-&gt;[3)-alpha-D-Xyl-(1-&gt;3)-beta-D-GlcA-(1-&gt;](n+1)-4)-beta-D-Xyl-(1-&gt;4)-Rib-ol-P-Rib-ol-P-3-beta-D-GalNAc-(1-&gt;3)-beta-D-GlcNAc-(1-&gt;4)-O-6-P-alpha-D-Man}-L-Thr-[protein] + UDP + H(+). It participates in protein modification; protein glycosylation. In terms of biological role, bifunctional glycosyltransferase with both alpha-1,3-xylosyltransferase and beta-1,3-glucuronyltransferase activities involved in the maturation of alpha-dystroglycan (DAG1) by glycosylation leading to DAG1 binding to laminin G-like domain-containing extracellular proteins with high affinity. Elongates the glucuronyl-beta-1,4-xylose-beta disaccharide primer structure initiated by B4GAT1 by adding repeating units [-3-Xylose-alpha-1,3-GlcA-beta-1-] to produce a heteropolysaccharide. Requires the phosphorylation of core M3 (O-mannosyl trisaccharide) by POMK to elongate the glucuronyl-beta-1,4-xylose-beta disaccharide primer. Plays a key role in skeletal muscle function and regeneration. The polypeptide is Xylosyl- and glucuronyltransferase LARGE1 (Gallus gallus (Chicken)).